A 230-amino-acid polypeptide reads, in one-letter code: UPF0173 metal-dependent hydrolase MK1542 (230 aa).

The protein belongs to the UPF0173 family.

In Methanopyrus kandleri (strain AV19 / DSM 6324 / JCM 9639 / NBRC 100938), this protein is UPF0173 metal-dependent hydrolase MK1542.